Here is a 997-residue protein sequence, read N- to C-terminus: Translation initiation factor IF-2 (997 aa).

Residues 101 to 409 (ELAAEQAAAR…QHQDRRHEQV (309 aa)) form a disordered region. Composition is skewed to low complexity over residues 116–185 (AEAV…QAEP), 195–208 (AAPA…VEPA), and 244–280 (PSAP…PAAP). A compositionally biased stretch (basic and acidic residues) spans 281-292 (DRAREEARRAAE). Residues 385–394 (RAGGKGGRGG) are compositionally biased toward gly residues. Residues 400 to 409 (QHQDRRHEQV) are compositionally biased toward basic and acidic residues. In terms of domain architecture, tr-type G spans 498-665 (PRAPVVTVMG…NVLLQAEILE (168 aa)). The segment at 507–514 (GHVDHGKT) is G1. GTP is bound at residue 507-514 (GHVDHGKT). The tract at residues 532 to 536 (GITQH) is G2. The interval 553–556 (DTPG) is G3. GTP is bound by residues 553–557 (DTPGH) and 607–610 (NKID). The segment at 607–610 (NKID) is G4. Positions 643-645 (SAK) are G5.

This sequence belongs to the TRAFAC class translation factor GTPase superfamily. Classic translation factor GTPase family. IF-2 subfamily.

Its subcellular location is the cytoplasm. In terms of biological role, one of the essential components for the initiation of protein synthesis. Protects formylmethionyl-tRNA from spontaneous hydrolysis and promotes its binding to the 30S ribosomal subunits. Also involved in the hydrolysis of GTP during the formation of the 70S ribosomal complex. The protein is Translation initiation factor IF-2 of Bordetella bronchiseptica (strain ATCC BAA-588 / NCTC 13252 / RB50) (Alcaligenes bronchisepticus).